The sequence spans 909 residues: E3 ubiquitin-protein ligase HACE1 (909 aa).

Residues 1–21 (MERAMEQLNRLTRSLRRARTV) form an N-terminal helix important for homodimerization region. ANK repeat units follow at residues 23–55 (LPED…NSKF), 64–93 (VKRS…NPNY), 97–126 (SGCT…DVNI), 130–159 (EGLT…DVDV), 163–192 (MGQT…DINR), 196–226 (SGAT…YLPD), and 228–253 (NGVT…QYHP). The disordered stretch occupies residues 398-433 (QDQEAPSLSAFEPPGPGSYESLPPGPGDSKPEVLAG). The HECT domain occupies 574–909 (NCAKLKQGIA…HCGSYGYTMA (336 aa)). The active-site Glycyl thioester intermediate is the cysteine 876.

Homodimer. The homodimer is autoinhibited and stabilized by its N-terminal helix. Interacts with RAB1 (RAB1A, RAB1B or RAB1C), RAB4 (RAB4A or RAB4B) and RAB11 (RAB11A or RAB11B); in a GTP-dependent manner. Interacts with the 26S proteasomal complex through the 20S core proteasomal subunit. Interacts with RARB. In terms of processing, autoubiquitinated.

It localises to the golgi apparatus. Its subcellular location is the golgi stack membrane. It is found in the cytoplasm. The protein resides in the endoplasmic reticulum. The enzyme catalyses S-ubiquitinyl-[E2 ubiquitin-conjugating enzyme]-L-cysteine + [acceptor protein]-L-lysine = [E2 ubiquitin-conjugating enzyme]-L-cysteine + N(6)-ubiquitinyl-[acceptor protein]-L-lysine.. Its pathway is protein modification; protein ubiquitination. With respect to regulation, sterically autoinhibited in its dimeric state. Functionally, E3 ubiquitin-protein ligase involved in Golgi membrane fusion and regulation of small GTPases. Acts as a regulator of Golgi membrane dynamics during the cell cycle: recruited to Golgi membrane by Rab proteins and regulates postmitotic Golgi membrane fusion. Acts by mediating ubiquitination during mitotic Golgi disassembly, ubiquitination serving as a signal for Golgi reassembly later, after cell division. Specifically binds GTP-bound RAC1, mediating ubiquitination and subsequent degradation of active RAC1, thereby playing a role in host defense against pathogens. May also act as a transcription regulator via its interaction with RARB. This is E3 ubiquitin-protein ligase HACE1 (Hace1) from Mus musculus (Mouse).